A 277-amino-acid chain; its full sequence is Polyamine aminopropyltransferase (277 aa).

The PABS domain maps to 2 to 235 (ELWFTENQDE…SLWTFTMGSK (234 aa)). An S-methyl-5'-thioadenosine-binding site is contributed by glutamine 31. Residues histidine 62 and aspartate 86 each coordinate spermidine. Residues glutamate 106 and 137–138 (DG) each bind S-methyl-5'-thioadenosine. The active-site Proton acceptor is the aspartate 155. Residue 155–158 (DSTD) participates in spermidine binding. Proline 162 serves as a coordination point for S-methyl-5'-thioadenosine.

This sequence belongs to the spermidine/spermine synthase family. Homodimer or homotetramer.

The protein resides in the cytoplasm. The enzyme catalyses S-adenosyl 3-(methylsulfanyl)propylamine + putrescine = S-methyl-5'-thioadenosine + spermidine + H(+). Its pathway is amine and polyamine biosynthesis; spermidine biosynthesis; spermidine from putrescine: step 1/1. Catalyzes the irreversible transfer of a propylamine group from the amino donor S-adenosylmethioninamine (decarboxy-AdoMet) to putrescine (1,4-diaminobutane) to yield spermidine. This chain is Polyamine aminopropyltransferase, found in Thermoanaerobacter pseudethanolicus (strain ATCC 33223 / 39E) (Clostridium thermohydrosulfuricum).